The primary structure comprises 162 residues: Eukaryotic translation initiation factor 5 (162 aa).

The tract at residues 59–162 (PPNLNPAVQG…EKDRMDIFYE (104 aa)) is disordered. Polar residues predominate over residues 85–109 (GDTNGDTSQVDDQNESLEASVNENS). Over residues 148–162 (DLEKREKDRMDIFYE) the composition is skewed to basic and acidic residues.

It belongs to the eIF-2-beta/eIF-5 family.

Functionally, catalyzes the hydrolysis of GTP bound to the 40S ribosomal initiation complex (40S.mRNA.Met-tRNA[F].eIF-2.GTP) with the subsequent joining of a 60S ribosomal subunit resulting in the release of eIF-2 and the guanine nucleotide. The subsequent joining of a 60S ribosomal subunit results in the formation of a functional 80S initiation complex (80S.mRNA.Met-tRNA[F]). The chain is Eukaryotic translation initiation factor 5 from Tribolium castaneum (Red flour beetle).